The primary structure comprises 396 residues: MGKEKLILAYSGGLDTSVAIAWLKKDYDVIAVCMDVGEGKDLDFIHDKALTIGAIESYILDVKDEFAEHFVLPALQAHAMYEQKYPLVSALSRPIIAQKLVEMAHQTGATTIAHGCTGKGNDQVRFEVAIAALDPELKVIAPVREWKWHREEEITFAKANGVPIPADLDNPYSIDQNLWGRANECGVLENPWNQAPEEAFGITKSPEEAPDCAEYIDITFQNGKPIAINNQEMTLADLILSLNEIAGKHGIGRIDHVENRLVGIKSREIYECPAAMVLLAAHKEIEDLTLVREVSHFKPILENELSNLIYNALWFSPATKAIIAYVKETQKVVNGTTKVKLYKGSAQVVARHSSNSLYDENLATYTAADSFDQDAAVGFIKLWGLPTQVNAQVNKG.

An ATP-binding site is contributed by 9 to 17 (AYSGGLDTS). Y85 provides a ligand contact to L-citrulline. G115 contributes to the ATP binding site. L-aspartate-binding residues include T117, N121, and D122. N121 serves as a coordination point for L-citrulline. Positions 125, 173, 258, and 270 each coordinate L-citrulline.

It belongs to the argininosuccinate synthase family. Type 1 subfamily. Homotetramer.

The protein resides in the cytoplasm. The catalysed reaction is L-citrulline + L-aspartate + ATP = 2-(N(omega)-L-arginino)succinate + AMP + diphosphate + H(+). Its pathway is amino-acid biosynthesis; L-arginine biosynthesis; L-arginine from L-ornithine and carbamoyl phosphate: step 2/3. The polypeptide is Argininosuccinate synthase (Streptococcus agalactiae serotype V (strain ATCC BAA-611 / 2603 V/R)).